The primary structure comprises 104 residues: N(4)-acetylcytidine amidohydrolase (104 aa).

The 87-residue stretch at 7–93 folds into the ASCH domain; that stretch reads MTFFSRFEAD…EVIQEIYPGI (87 aa). The Proton acceptor role is filled by lysine 22. Threonine 25 functions as the Nucleophile in the catalytic mechanism. Catalysis depends on glutamate 75, which acts as the Proton donor.

This sequence belongs to the N(4)-acetylcytidine amidohydrolase family.

It carries out the reaction N(4)-acetylcytidine + H2O = cytidine + acetate + H(+). It catalyses the reaction N(4)-acetyl-2'-deoxycytidine + H2O = 2'-deoxycytidine + acetate + H(+). The enzyme catalyses N(4)-acetylcytosine + H2O = cytosine + acetate + H(+). Its function is as follows. Catalyzes the hydrolysis of N(4)-acetylcytidine (ac4C). The protein is N(4)-acetylcytidine amidohydrolase of Vibrio vulnificus (strain YJ016).